The primary structure comprises 159 residues: Transcriptional repressor NrdR (159 aa).

The segment covering 1 to 11 (MQCPSCQNTDS) has biased composition (polar residues). The segment at 1-20 (MQCPSCQNTDSRVLESRSAD) is disordered. Residues 3–34 (CPSCQNTDSRVLESRSADSGRSVRRRRECLNC) fold into a zinc finger. Positions 49–139 (INVLKRSGAK…VYRQFNGIND (91 aa)) constitute an ATP-cone domain.

This sequence belongs to the NrdR family. Zn(2+) is required as a cofactor.

Negatively regulates transcription of bacterial ribonucleotide reductase nrd genes and operons by binding to NrdR-boxes. The chain is Transcriptional repressor NrdR from Prochlorococcus marinus (strain NATL1A).